We begin with the raw amino-acid sequence, 272 residues long: Ethanolamine ammonia-lyase small subunit (272 aa).

Adenosylcob(III)alamin is bound by residues valine 161, glutamate 182, and cysteine 211.

The protein belongs to the EutC family. As to quaternary structure, the basic unit is a heterodimer which dimerizes to form tetramers. The heterotetramers trimerize; 6 large subunits form a core ring with 6 small subunits projecting outwards. It depends on adenosylcob(III)alamin as a cofactor.

It localises to the bacterial microcompartment. The enzyme catalyses ethanolamine = acetaldehyde + NH4(+). Its pathway is amine and polyamine degradation; ethanolamine degradation. In terms of biological role, catalyzes the deamination of various vicinal amino-alcohols to oxo compounds. Allows this organism to utilize ethanolamine as the sole source of nitrogen and carbon in the presence of external vitamin B12. This chain is Ethanolamine ammonia-lyase small subunit, found in Pseudomonas putida (strain ATCC 700007 / DSM 6899 / JCM 31910 / BCRC 17059 / LMG 24140 / F1).